Reading from the N-terminus, the 330-residue chain is ADP-L-glycero-D-manno-heptose-6-epimerase (330 aa).

NADP(+) is bound by residues 11–12, 32–33, Lys39, Lys54, 75–79, and Asn92; these read FI, DN, and EGACS. The active-site Proton acceptor is the Tyr139. Lys143 contributes to the NADP(+) binding site. Asn168 is a substrate binding site. Residues Val169 and Lys177 each contribute to the NADP(+) site. Lys177 (proton acceptor) is an active-site residue. Substrate-binding positions include Arg179, His186, 200–203, Arg213, and Tyr292; that span reads FGEY.

It belongs to the NAD(P)-dependent epimerase/dehydratase family. HldD subfamily. Homopentamer. Requires NADP(+) as cofactor.

It catalyses the reaction ADP-D-glycero-beta-D-manno-heptose = ADP-L-glycero-beta-D-manno-heptose. It functions in the pathway nucleotide-sugar biosynthesis; ADP-L-glycero-beta-D-manno-heptose biosynthesis; ADP-L-glycero-beta-D-manno-heptose from D-glycero-beta-D-manno-heptose 7-phosphate: step 4/4. Catalyzes the interconversion between ADP-D-glycero-beta-D-manno-heptose and ADP-L-glycero-beta-D-manno-heptose via an epimerization at carbon 6 of the heptose. The polypeptide is ADP-L-glycero-D-manno-heptose-6-epimerase (Burkholderia ambifaria (strain MC40-6)).